The following is a 467-amino-acid chain: Cytochrome P450 76A1 (467 aa).

Residue cysteine 410 participates in heme binding.

It belongs to the cytochrome P450 family. Requires heme as cofactor.

In Solanum melongena (Eggplant), this protein is Cytochrome P450 76A1 (CYP76A1).